We begin with the raw amino-acid sequence, 257 residues long: Imidazole glycerol phosphate synthase subunit HisF (257 aa).

Catalysis depends on residues Asp-12 and Asp-131.

It belongs to the HisA/HisF family. Heterodimer of HisH and HisF.

The protein localises to the cytoplasm. It catalyses the reaction 5-[(5-phospho-1-deoxy-D-ribulos-1-ylimino)methylamino]-1-(5-phospho-beta-D-ribosyl)imidazole-4-carboxamide + L-glutamine = D-erythro-1-(imidazol-4-yl)glycerol 3-phosphate + 5-amino-1-(5-phospho-beta-D-ribosyl)imidazole-4-carboxamide + L-glutamate + H(+). The protein operates within amino-acid biosynthesis; L-histidine biosynthesis; L-histidine from 5-phospho-alpha-D-ribose 1-diphosphate: step 5/9. Functionally, IGPS catalyzes the conversion of PRFAR and glutamine to IGP, AICAR and glutamate. The HisF subunit catalyzes the cyclization activity that produces IGP and AICAR from PRFAR using the ammonia provided by the HisH subunit. The chain is Imidazole glycerol phosphate synthase subunit HisF from Burkholderia pseudomallei (strain 1106a).